The sequence spans 466 residues: Cytochrome P450 85A1 (466 aa).

The chain crosses the membrane as a helical span at residues 1 to 21 (MVLAVLIGVLVGIVLVSSLLL). Residue C416 coordinates heme.

It belongs to the cytochrome P450 family. It depends on heme as a cofactor.

It is found in the membrane. The catalysed reaction is 6-deoxoteasterone + reduced [NADPH--hemoprotein reductase] + O2 = 6alpha-hydroxyteasterone + oxidized [NADPH--hemoprotein reductase] + H2O + H(+). It catalyses the reaction 6alpha-hydroxytyphasterol + reduced [NADPH--hemoprotein reductase] + O2 = teasterone + oxidized [NADPH--hemoprotein reductase] + 2 H2O + H(+). The enzyme catalyses 3-dehydro-6-deoxoteasterone + reduced [NADPH--hemoprotein reductase] + O2 = 3-dehydro-6alpha-hydroxyteasterone + oxidized [NADPH--hemoprotein reductase] + H2O + H(+). It carries out the reaction 3-dehydro-6alpha-hydroxyteasterone + reduced [NADPH--hemoprotein reductase] + O2 = 3-dehydroteasterone + oxidized [NADPH--hemoprotein reductase] + 2 H2O + H(+). The catalysed reaction is 6-deoxotyphasterol + reduced [NADPH--hemoprotein reductase] + O2 = 6alpha-hydroxytyphasterol + oxidized [NADPH--hemoprotein reductase] + H2O + H(+). It catalyses the reaction 6alpha-hydroxytyphasterol + reduced [NADPH--hemoprotein reductase] + O2 = typhasterol + oxidized [NADPH--hemoprotein reductase] + 2 H2O + H(+). The enzyme catalyses 6-deoxocastasterone + reduced [NADPH--hemoprotein reductase] + O2 = 6alpha-hydroxycastasterone + oxidized [NADPH--hemoprotein reductase] + H2O + H(+). It carries out the reaction 6alpha-hydroxycastasterone + reduced [NADPH--hemoprotein reductase] + O2 = castasterone + oxidized [NADPH--hemoprotein reductase] + 2 H2O + H(+). The catalysed reaction is 3-dehydro-6-deoxoteasterone + 2 reduced [NADPH--hemoprotein reductase] + 2 O2 = 3-dehydroteasterone + 2 oxidized [NADPH--hemoprotein reductase] + 3 H2O + 2 H(+). It catalyses the reaction 6-deoxocastasterone + 2 reduced [NADPH--hemoprotein reductase] + 2 O2 = castasterone + 2 oxidized [NADPH--hemoprotein reductase] + 3 H2O + 2 H(+). The enzyme catalyses 6-deoxoteasterone + 2 reduced [NADPH--hemoprotein reductase] + 2 O2 = teasterone + 2 oxidized [NADPH--hemoprotein reductase] + 3 H2O + 2 H(+). It carries out the reaction 6-deoxotyphasterol + 2 reduced [NADPH--hemoprotein reductase] + 2 O2 = typhasterol + 2 oxidized [NADPH--hemoprotein reductase] + 3 H2O + 2 H(+). It functions in the pathway plant hormone biosynthesis; brassinosteroid biosynthesis. In terms of biological role, involved in reduction steps of the biosynthesis of plant campesterol-derivative steroids, ending to castasterone (CS) but missing brassinolide (BL). Catalyzes the C6-oxidation step in brassinosteroids biosynthesis; the conversion of 6-deoxoteasterone (6-deoxoTE) to teasterone (TE), 3-dehydro-6-deoxoteasterone (6-deoxo3DT, 6-deoxo-3-DHT) to 3-dehydroteasterone (3DT, 3-DHT), 6-deoxotyphasterol (6-deoxoTY) to typhasterol (TY) and of 6-deoxocastasterone (6-deoxoCS) to castasterone (CS). The chain is Cytochrome P450 85A1 from Brachypodium distachyon (Purple false brome).